Consider the following 1071-residue polypeptide: DNA-directed RNA polymerase subunit beta (1071 aa).

Belongs to the RNA polymerase beta chain family. In plastids the minimal PEP RNA polymerase catalytic core is composed of four subunits: alpha, beta, beta', and beta''. When a (nuclear-encoded) sigma factor is associated with the core the holoenzyme is formed, which can initiate transcription.

Its subcellular location is the plastid. The protein resides in the chloroplast. The catalysed reaction is RNA(n) + a ribonucleoside 5'-triphosphate = RNA(n+1) + diphosphate. Its function is as follows. DNA-dependent RNA polymerase catalyzes the transcription of DNA into RNA using the four ribonucleoside triphosphates as substrates. This is DNA-directed RNA polymerase subunit beta from Adiantum capillus-veneris (Maidenhair fern).